The sequence spans 924 residues: Protein argonaute 4 (924 aa).

Disordered stretches follow at residues 1-37 and 159-185; these read MDST…PPNV and TRAN…RRPN. The span at 26–37 shows a compositional bias: pro residues; the sequence is LPPPPPVIPPNV. The segment covering 162–173 has biased composition (low complexity); sequence NGNGSPNGNESP. Positions 292–408 constitute a PAZ domain; that stretch reads PVVDFLIANQ…IPLELCALVP (117 aa). The Piwi domain occupies 577–885; that stretch reads FILCVLPDKK…AAAQLGTFMK (309 aa). Positions 584-591 match the Nuclear localization signal motif; that stretch reads DKKNSDLY.

Belongs to the argonaute family. Ago subfamily. As to quaternary structure, interacts with NRPE1 (via C-terminus). Binding to NRPE1 is required for its function in RdDM. Interacts with turnip crinkle virus (TCV) capsid protein P38; this interaction inhibits probably RNA silencing ability of AGO4. Interacts with SDE3. Binds to RDM3. Binds chromatin at loci subject to transcriptional silencing. Interacts with MBD6. In terms of tissue distribution, expressed in embryos, mature leaves, vascular tissue of the sepals, stamens and stigma, at the tip of the style and siliques.

The protein resides in the nucleus. The protein localises to the nucleolus. It localises to the nucleoplasm. Its subcellular location is the cajal body. Functionally, together with RDM3, required for transcriptional gene silencing (TGS) by DNA methylation and repressive histone modifications (H3K9me2) of several chromatin loci. Component of the RISC complex that associate with the small interfering RNA (siRNA) pathway involved in direct cytosine methylation at endogenous DNA repeats. Forms a AGO4/NRPE1/siRNA complex in cajal body, facilitating its function in RNA-directed gene silencing of target loci. Required for CpNpG and asymmetric DNA methylation as well as histone H3 'Lys-9' methylation (H3K9me) at SUP and SN1 loci. May be not required for CpG methylation. Required for the production and maintenance of retrotransposon SN1 and Copia and ribosomal 5S 25 nucleotide siRNAs specialized in gene silencing at chromatin level. Involved in de novo methylation of FWA gene and required for the maintenance of RNA-directed DNA methylation (RdDM) triggered by inverted repeat transgenes. Interacts with miRNA miR390 and miR172, targeting respectively TAS3 and AP2 mRNAs, and mediates cleavage of miRNA targets. Associates mainly with small RNAs of 24 nucleotide in length and preferentially recruits small RNAs with a 5' terminal adenosine. Targeted by the turnip yellows virus (TuYV) protein P0 (via F-box-like domain) for probable proteasome degradation and thereby inactivating AGO4 function in RNA silencing. Required for resistance to the bacterial pathogen P.syringae. Works independently of the RdDM pathway in mediating resistance to P.syringae. RdDM is involved in viral genome methylation as an epigenetic defense against geminiviruses. This is Protein argonaute 4 from Arabidopsis thaliana (Mouse-ear cress).